Consider the following 468-residue polypeptide: MLTLYNTMSRKKETFTPLHPGEIRMYVCGPTVYNYIHIGNARSAIAFDTIRRYFEYRGYKVTYVSNFTDVDDKIINAAHKTGEAPLDLAQRFIDAFMEDTTALGIEPATAHPRASQMIPDIIEFVQDLIDKEYAYAVDGDVYYRARKFKHYGELSHQNVDELEEGASQHITQDELAKKEDPIDFALWKAAKPGEISWESPWGKGRPGWHIECSVMSTKLLGDTFDIHGGGQDLEFPHHENEIAQSEAKTDKQFVRYWMHNGFVTIGEDDEKMSKSLGNFITVHDIRKTVDPQVLRFFMAGTQYRMPIRYSETNLKNAANSLNRLKIARENLTYRRRGAETGVDPQITKQLQTLKDRFVTAMDDDINVQNGLTVLFDLAKLLNEYANEETVKSESINDLLNEYDAWLQIFGVVFADQKSLDADIDALVKARDAARAAKDFAKSDQIRDQLAAQGIILEDTPQGTRWRRQ.

Residue cysteine 28 participates in Zn(2+) binding. A 'HIGH' region motif is present at residues proline 30–asparagine 40. Positions 212, 237, and 241 each coordinate Zn(2+). The short motif at lysine 271–serine 275 is the 'KMSKS' region element. Lysine 274 is a binding site for ATP.

This sequence belongs to the class-I aminoacyl-tRNA synthetase family. As to quaternary structure, monomer. Zn(2+) serves as cofactor.

It is found in the cytoplasm. The enzyme catalyses tRNA(Cys) + L-cysteine + ATP = L-cysteinyl-tRNA(Cys) + AMP + diphosphate. This chain is Cysteine--tRNA ligase, found in Lacticaseibacillus casei (strain BL23) (Lactobacillus casei).